We begin with the raw amino-acid sequence, 184 residues long: Peptidyl-tRNA hydrolase (184 aa).

Residue Tyr-14 participates in tRNA binding. Catalysis depends on His-19, which acts as the Proton acceptor. 3 residues coordinate tRNA: Phe-64, Asn-66, and Asn-112.

Belongs to the PTH family. As to quaternary structure, monomer.

It localises to the cytoplasm. It carries out the reaction an N-acyl-L-alpha-aminoacyl-tRNA + H2O = an N-acyl-L-amino acid + a tRNA + H(+). Functionally, hydrolyzes ribosome-free peptidyl-tRNAs (with 1 or more amino acids incorporated), which drop off the ribosome during protein synthesis, or as a result of ribosome stalling. In terms of biological role, catalyzes the release of premature peptidyl moieties from peptidyl-tRNA molecules trapped in stalled 50S ribosomal subunits, and thus maintains levels of free tRNAs and 50S ribosomes. This Thermoanaerobacter pseudethanolicus (strain ATCC 33223 / 39E) (Clostridium thermohydrosulfuricum) protein is Peptidyl-tRNA hydrolase.